The chain runs to 116 residues: Large ribosomal subunit protein uL18 (116 aa).

The protein belongs to the universal ribosomal protein uL18 family. Part of the 50S ribosomal subunit; part of the 5S rRNA/L5/L18/L25 subcomplex. Contacts the 5S and 23S rRNAs.

Functionally, this is one of the proteins that bind and probably mediate the attachment of the 5S RNA into the large ribosomal subunit, where it forms part of the central protuberance. This chain is Large ribosomal subunit protein uL18, found in Mycoplasma mycoides subsp. mycoides SC (strain CCUG 32753 / NCTC 10114 / PG1).